The primary structure comprises 562 residues: NAD-dependent malic enzyme (562 aa).

The Proton donor role is filled by Tyr101. An NAD(+)-binding site is contributed by Arg154. Lys172 acts as the Proton acceptor in catalysis. Residues Glu243, Asp244, and Asp267 each coordinate a divalent metal cation. The NAD(+) site is built by Asp267 and Asn415.

This sequence belongs to the malic enzymes family. Homotetramer. The cofactor is Mg(2+). Requires Mn(2+) as cofactor.

It carries out the reaction (S)-malate + NAD(+) = pyruvate + CO2 + NADH. The enzyme catalyses oxaloacetate + H(+) = pyruvate + CO2. The protein is NAD-dependent malic enzyme of Shewanella putrefaciens (strain CN-32 / ATCC BAA-453).